Reading from the N-terminus, the 104-residue chain is uncharacterized protein (104 aa).

Positions 58-71 are enriched in basic and acidic residues; the sequence is PERDRARRDRDHHP. Residues 58–84 are disordered; sequence PERDRARRDRDHHPWSRSRSQLSPRMA.

This is an uncharacterized protein from Mycobacterium tuberculosis (strain ATCC 25618 / H37Rv).